The chain runs to 299 residues: Sulfate adenylyltransferase subunit 2 (299 aa).

Belongs to the PAPS reductase family. CysD subfamily. As to quaternary structure, heterodimer composed of CysD, the smaller subunit, and CysN.

The enzyme catalyses sulfate + ATP + H(+) = adenosine 5'-phosphosulfate + diphosphate. Its pathway is sulfur metabolism; hydrogen sulfide biosynthesis; sulfite from sulfate: step 1/3. With CysN forms the ATP sulfurylase (ATPS) that catalyzes the adenylation of sulfate producing adenosine 5'-phosphosulfate (APS) and diphosphate, the first enzymatic step in sulfur assimilation pathway. APS synthesis involves the formation of a high-energy phosphoric-sulfuric acid anhydride bond driven by GTP hydrolysis by CysN coupled to ATP hydrolysis by CysD. This is Sulfate adenylyltransferase subunit 2 from Colwellia psychrerythraea (strain 34H / ATCC BAA-681) (Vibrio psychroerythus).